Here is a 1201-residue protein sequence, read N- to C-terminus: Kinesin-like protein costa (1201 aa).

A Kinesin motor domain is found at 4 to 391 (PIQVAVRIFP…LQFAFKVQCV (388 aa)). Residues 23–92 (SFGPTEPKKD…NGNDSGQKDY (70 aa)) are disordered. The segment covering 28-56 (EPKKDAQAVDEGADSKDSEAQVPAAEKDN) has biased composition (basic and acidic residues). Residues 57 to 75 (PSISETDPNGNAEQDSAAD) show a composition bias toward polar residues. Position 175-182 (175-182 (GQRGQGKS)) interacts with ATP. 3 disordered regions span residues 502–536 (AEEP…PDLD), 565–606 (HPKA…GASL), and 618–639 (ASQQ…ESSS). The segment covering 510-521 (SEAANSESPNSD) has biased composition (low complexity). Residues Ser599 and Ser605 each carry the phosphoserine modification. 2 coiled-coil regions span residues 652–821 (AATA…ELVK) and 968–1001 (TKVI…ERVL).

The protein belongs to the TRAFAC class myosin-kinesin ATPase superfamily. Kinesin family. KIF27 subfamily. In terms of assembly, homodimer (Potential). Binds microtubules. Interacts with ci, smo, sgg, CkIalpha and protein kinase A catalytic subunit. Interacts (via kinesin motor domain) with Ubr3. Post-translationally, polyubiquitinated by Ubr3, which leads to proteasomal degradation.

The protein localises to the cytoplasm. Its subcellular location is the cytoskeleton. Functionally, regulates cubitus interruptus (ci) processing by recruiting multiple kinases to promote its efficient phosphorylation. Scaffolds multiple kinases and ci into proximity to promote its hyperphosphorylation, which then targets it for SCFSlimb/proteasome-mediated processing to generate its repressor form. Hh signaling inhibits ci phosphorylation by interfering with the cos-ci-kinases complex formation. Negatively regulates hh-signaling pathways during various processes, including photoreceptor differentiation. May negatively regulate a hh-signaling pathway which functions in the intestinal immune response to bacterial uracil by activating the Duox-dependent production of reactive oxygen species (ROS). This Drosophila melanogaster (Fruit fly) protein is Kinesin-like protein costa (cos).